The sequence spans 148 residues: Ribose-5-P isomerase B (148 aa).

Residue 8 to 9 (DE) participates in D-ribulose 5-phosphate binding. The Proton acceptor role is filled by C65. Residues 66–70 (GTGIG), N99, R132, and K136 each bind D-ribulose 5-phosphate.

It belongs to the LacAB/RpiB family.

It catalyses the reaction aldehydo-D-ribose 5-phosphate = D-ribulose 5-phosphate. Its pathway is carbohydrate degradation; pentose phosphate pathway; D-ribose 5-phosphate from D-ribulose 5-phosphate (non-oxidative stage): step 1/1. Functionally, catalyzes the interconversion of ribulose-5-P and ribose-5-P. The sequence is that of Ribose-5-P isomerase B from Listeria innocua serovar 6a (strain ATCC BAA-680 / CLIP 11262).